The primary structure comprises 119 residues: Large ribosomal subunit protein bL20 (119 aa).

It belongs to the bacterial ribosomal protein bL20 family.

Its function is as follows. Binds directly to 23S ribosomal RNA and is necessary for the in vitro assembly process of the 50S ribosomal subunit. It is not involved in the protein synthesizing functions of that subunit. The protein is Large ribosomal subunit protein bL20 of Streptococcus agalactiae serotype Ia (strain ATCC 27591 / A909 / CDC SS700).